Here is a 354-residue protein sequence, read N- to C-terminus: L-lactate dehydrogenase (354 aa).

NAD(+) contacts are provided by residues 73–78 and arginine 120; that span reads DAVPDK. Positions 127, 159, and 190 each coordinate substrate. Residue asparagine 159 coordinates NAD(+). Residue histidine 214 is the Proton acceptor of the active site. Threonine 269 contacts substrate. The segment at 302-332 is disordered; that stretch reads HGIPDGTTSSSACPPRRPRRRPGRREMELTE.

This sequence belongs to the LDH/MDH superfamily. LDH family. In terms of assembly, homotetramer.

It carries out the reaction (S)-lactate + NAD(+) = pyruvate + NADH + H(+). It participates in fermentation; pyruvate fermentation to lactate; (S)-lactate from pyruvate: step 1/1. This is L-lactate dehydrogenase from Zea mays (Maize).